Here is a 295-residue protein sequence, read N- to C-terminus: Small ribosomal subunit biogenesis GTPase RsgA (295 aa).

The region spanning 65–223 is the CP-type G domain; that stretch reads KNQLVRPPVA…VLDTPGFTAL (159 aa). Residues 114 to 117 and 165 to 173 contribute to the GTP site; these read NKVD and GPSGVGKSS. Residues Cys-246, Cys-251, His-253, and Cys-259 each coordinate Zn(2+).

Belongs to the TRAFAC class YlqF/YawG GTPase family. RsgA subfamily. In terms of assembly, monomer. Associates with 30S ribosomal subunit, binds 16S rRNA. The cofactor is Zn(2+).

The protein localises to the cytoplasm. One of several proteins that assist in the late maturation steps of the functional core of the 30S ribosomal subunit. Helps release RbfA from mature subunits. May play a role in the assembly of ribosomal proteins into the subunit. Circularly permuted GTPase that catalyzes slow GTP hydrolysis, GTPase activity is stimulated by the 30S ribosomal subunit. The polypeptide is Small ribosomal subunit biogenesis GTPase RsgA (Caldanaerobacter subterraneus subsp. tengcongensis (strain DSM 15242 / JCM 11007 / NBRC 100824 / MB4) (Thermoanaerobacter tengcongensis)).